Consider the following 57-residue polypeptide: Cold shock protein CspB (57 aa).

The 57-residue stretch at 1–57 (IKWFNSEKGFGFIEVEGQDDVFVHFSAIQGEGFKCLEEGQAVSFEIVEGNRGPQAAN) folds into the CSD domain.

In terms of assembly, homodimer.

It localises to the cytoplasm. Functionally, affects cell viability at low temperatures. The chain is Cold shock protein CspB (cspB) from Sporosarcina globispora (Bacillus globisporus).